Consider the following 501-residue polypeptide: Type II secretion system protein E (501 aa).

262–269 (GPTGSGKS) is an ATP binding site. 4 residues coordinate Zn(2+): Cys395, Cys398, Cys428, and Cys431.

The protein belongs to the GSP E family. Forms homooligomers; most probably hexamers. Interacts with ExeL/GspL. It depends on Zn(2+) as a cofactor.

The protein localises to the cell inner membrane. The enzyme catalyses ATP + H2O + cellular proteinSide 1 = ADP + phosphate + cellular proteinSide 2.. ATPase component of the type II secretion system required for the energy-dependent secretion of extracellular factors such as proteases and toxins from the periplasm. Acts as a molecular motor to provide the energy that is required for assembly of the pseudopilus and the extrusion of substrates generated in the cytoplasm. This is Type II secretion system protein E (exeE) from Aeromonas hydrophila.